The primary structure comprises 135 residues: UPF0216 protein MTH_949 (135 aa).

This sequence belongs to the UPF0216 family.

This Methanothermobacter thermautotrophicus (strain ATCC 29096 / DSM 1053 / JCM 10044 / NBRC 100330 / Delta H) (Methanobacterium thermoautotrophicum) protein is UPF0216 protein MTH_949.